A 635-amino-acid chain; its full sequence is Membrane protein insertase YidC (635 aa).

A helical membrane pass occupies residues Leu-8–Pro-28. The interval Pro-33–Gln-61 is disordered. The next 4 membrane-spanning stretches (helical) occupy residues Met-396–Phe-416, Leu-470–Ile-490, Ser-528–Met-548, and Ile-564–Val-584. The segment at Ile-615–Lys-635 is disordered. A compositionally biased stretch (basic and acidic residues) spans Lys-624–Lys-635.

It belongs to the OXA1/ALB3/YidC family. Type 1 subfamily. In terms of assembly, interacts with the Sec translocase complex via SecD. Specifically interacts with transmembrane segments of nascent integral membrane proteins during membrane integration.

Its subcellular location is the cell inner membrane. Its function is as follows. Required for the insertion and/or proper folding and/or complex formation of integral membrane proteins into the membrane. Involved in integration of membrane proteins that insert both dependently and independently of the Sec translocase complex, as well as at least some lipoproteins. Aids folding of multispanning membrane proteins. The sequence is that of Membrane protein insertase YidC from Paracoccus denitrificans (strain Pd 1222).